Reading from the N-terminus, the 223-residue chain is uncharacterized protein (223 aa).

Residues 40 to 70 (GSKRLKPAKFGTEGKERVEQRTERQRTGSSK) form a disordered region. Basic and acidic residues predominate over residues 51-70 (TEGKERVEQRTERQRTGSSK).

This is an uncharacterized protein from Homo sapiens (Human).